The primary structure comprises 190 residues: Probable molybdenum cofactor guanylyltransferase (190 aa).

GTP is bound by residues 9–11 (LCG), K21, D65, and D94. D94 serves as a coordination point for Mg(2+).

It belongs to the MobA family. The cofactor is Mg(2+).

The protein localises to the cytoplasm. It carries out the reaction Mo-molybdopterin + GTP + H(+) = Mo-molybdopterin guanine dinucleotide + diphosphate. Functionally, transfers a GMP moiety from GTP to Mo-molybdopterin (Mo-MPT) cofactor (Moco or molybdenum cofactor) to form Mo-molybdopterin guanine dinucleotide (Mo-MGD) cofactor. This chain is Probable molybdenum cofactor guanylyltransferase, found in Flavobacterium johnsoniae (strain ATCC 17061 / DSM 2064 / JCM 8514 / BCRC 14874 / CCUG 350202 / NBRC 14942 / NCIMB 11054 / UW101) (Cytophaga johnsonae).